Reading from the N-terminus, the 519-residue chain is Ribonuclease Y (519 aa).

A helical transmembrane segment spans residues 3–23 (LIEIVLLLVGMAVGAATGFIL). Positions 209–272 (TVTAVSLPSE…QIAKMALERL (64 aa)) constitute a KH domain. The region spanning 335 to 428 (VLQHSMEVAS…VQAADSLSGA (94 aa)) is the HD domain.

The protein belongs to the RNase Y family.

It localises to the cell membrane. Endoribonuclease that initiates mRNA decay. The chain is Ribonuclease Y from Oleidesulfovibrio alaskensis (strain ATCC BAA-1058 / DSM 17464 / G20) (Desulfovibrio alaskensis).